Consider the following 4265-residue polypeptide: Dynein axonemal heavy chain 1 (4265 aa).

The segment at methionine 1 to lysine 88 is disordered. The segment at methionine 1–isoleucine 1542 is stem. Residues proline 60–proline 69 show a composition bias toward pro residues. AAA stretches follow at residues tyrosine 1543–alanine 1764, glutamate 1824–lysine 2057, threonine 2189–glycine 2449, and aspartate 2547–histidine 2799. Positions glycine 1581–threonine 1588 match the GPAGTGKT motif motif. Glycine 1581–threonine 1588 contacts ATP. The short motif at cysteine 1631–arginine 1637 is the CFDEFNR motif element. ATP-binding positions include glycine 1862–serine 1869, glycine 2227–threonine 2234, and glycine 2586–serine 2593. The interval phenylalanine 2814 to cysteine 3112 is stalk. Positions leucine 3074–leucine 3122 form a coiled coil. AAA stretches follow at residues leucine 3197–alanine 3427 and methionine 3640–methionine 3859.

It belongs to the dynein heavy chain family. In terms of assembly, consists of at least two heavy chains and a number of intermediate and light chains. Expressed primarily in trachea and testis, 2 tissues containing axonemal structures. Also expressed in brain.

The protein localises to the cytoplasm. Its subcellular location is the cytoskeleton. It is found in the cilium axoneme. The protein resides in the cell projection. It localises to the cilium. The protein localises to the flagellum. Force generating protein of cilia required for sperm flagellum motility. Produces force towards the minus ends of microtubules. Dynein has ATPase activity; the force-producing power stroke is thought to occur on release of ADP. Required in spermatozoa for the formation of the inner dynein arms and biogenesis of the axoneme. This is Dynein axonemal heavy chain 1 from Homo sapiens (Human).